The following is a 256-amino-acid chain: Thiazole synthase (256 aa).

K95 acts as the Schiff-base intermediate with DXP in catalysis. 1-deoxy-D-xylulose 5-phosphate contacts are provided by residues G156, 182 to 183 (AG), and 204 to 205 (NT).

This sequence belongs to the ThiG family. In terms of assembly, homotetramer. Forms heterodimers with either ThiH or ThiS.

The protein localises to the cytoplasm. It carries out the reaction [ThiS sulfur-carrier protein]-C-terminal-Gly-aminoethanethioate + 2-iminoacetate + 1-deoxy-D-xylulose 5-phosphate = [ThiS sulfur-carrier protein]-C-terminal Gly-Gly + 2-[(2R,5Z)-2-carboxy-4-methylthiazol-5(2H)-ylidene]ethyl phosphate + 2 H2O + H(+). Its pathway is cofactor biosynthesis; thiamine diphosphate biosynthesis. Catalyzes the rearrangement of 1-deoxy-D-xylulose 5-phosphate (DXP) to produce the thiazole phosphate moiety of thiamine. Sulfur is provided by the thiocarboxylate moiety of the carrier protein ThiS. In vitro, sulfur can be provided by H(2)S. The protein is Thiazole synthase of Escherichia coli O7:K1 (strain IAI39 / ExPEC).